The sequence spans 276 residues: Probable ABC transporter permease protein NosY (276 aa).

Transmembrane regions (helical) follow at residues 20–40 (WLLA…WLGA), 55–75 (IASL…LLAY), 111–131 (ILAL…ALLV), 146–166 (FMIS…VLSG), 179–199 (LGVW…LLVL), and 251–271 (VLWL…YAIF).

As to quaternary structure, the complex may be composed of an ATP-binding protein (NosF), a transmembrane protein (NosY) and a solute-binding protein (NosD).

It localises to the cell inner membrane. In terms of biological role, required for the assembly of the copper chromophores of nitrous oxide reductase. Could be part of the ABC transporter complex NosDFY. The sequence is that of Probable ABC transporter permease protein NosY from Stutzerimonas stutzeri (Pseudomonas stutzeri).